The following is a 362-amino-acid chain: Probable dual-specificity RNA methyltransferase RlmN (362 aa).

Residue Glu-105 is the Proton acceptor of the active site. A Radical SAM core domain is found at 111 to 344; the sequence is HEYGNSICVT…VTIRREQGHD (234 aa). Residues Cys-118 and Cys-349 are joined by a disulfide bond. [4Fe-4S] cluster is bound by residues Cys-125, Cys-129, and Cys-132. S-adenosyl-L-methionine-binding positions include 175–176, Ser-207, 230–232, and Asn-306; these read GE and SLH. Residue Cys-349 is the S-methylcysteine intermediate of the active site.

This sequence belongs to the radical SAM superfamily. RlmN family. [4Fe-4S] cluster is required as a cofactor.

It is found in the cytoplasm. It carries out the reaction adenosine(2503) in 23S rRNA + 2 reduced [2Fe-2S]-[ferredoxin] + 2 S-adenosyl-L-methionine = 2-methyladenosine(2503) in 23S rRNA + 5'-deoxyadenosine + L-methionine + 2 oxidized [2Fe-2S]-[ferredoxin] + S-adenosyl-L-homocysteine. It catalyses the reaction adenosine(37) in tRNA + 2 reduced [2Fe-2S]-[ferredoxin] + 2 S-adenosyl-L-methionine = 2-methyladenosine(37) in tRNA + 5'-deoxyadenosine + L-methionine + 2 oxidized [2Fe-2S]-[ferredoxin] + S-adenosyl-L-homocysteine. Specifically methylates position 2 of adenine 2503 in 23S rRNA and position 2 of adenine 37 in tRNAs. This chain is Probable dual-specificity RNA methyltransferase RlmN, found in Bacillus cereus (strain ATCC 14579 / DSM 31 / CCUG 7414 / JCM 2152 / NBRC 15305 / NCIMB 9373 / NCTC 2599 / NRRL B-3711).